A 1153-amino-acid chain; its full sequence is Tyrosine-protein kinase JAK1 (1153 aa).

One can recognise an FERM domain in the interval 32-416 (KGLEIHFYLA…GYFRLTVDAH (385 aa)). Residues 435–540 (GCHGPICTEY…NLRFQLRRCC (106 aa)) enclose the SH2; atypical domain. Protein kinase domains are found at residues 580–846 (IVQG…DIVM) and 872–1150 (LKKI…QQML). ATP is bound by residues 878–886 (LGEGHFGKV) and Lys-905. The active-site Proton acceptor is Asp-1000. Tyr-1031 and Tyr-1032 each carry phosphotyrosine; by autocatalysis.

This sequence belongs to the protein kinase superfamily. Tyr protein kinase family. JAK subfamily. The cofactor is Mg(2+).

It is found in the endomembrane system. It carries out the reaction L-tyrosyl-[protein] + ATP = O-phospho-L-tyrosyl-[protein] + ADP + H(+). Functionally, tyrosine kinase of the non-receptor type, involved in the IFN-alpha/beta/gamma signal pathway. Appears to be required in early development for specific cell migrations (epiboly), expression of homeobox protein goosecoid and formation of anterior structures. In Danio rerio (Zebrafish), this protein is Tyrosine-protein kinase JAK1 (jak1).